Reading from the N-terminus, the 317-residue chain is Small ribosomal subunit protein uS2 (317 aa).

Residue serine 2 is modified to N-acetylserine. Laminin-binding regions lie at residues 161–180 (IPCN…MLAR) and 205–229 (RDPE…EFQG). [DE]-W-[ST] repeat units lie at residues 230–232 (EWS), 245–247 (DWS), 288–290 (DWS), 297–299 (DWS), and 315–317 (EWS). Residues 242–317 (EVPDWSEGVQ…DWGGSTAEWS (76 aa)) are laminin-binding. The tract at residues 278–317 (PGPTTEGYSEDWSAQPATEDWSAAPTAQAGDWGGSTAEWS) is disordered.

This sequence belongs to the universal ribosomal protein uS2 family. In terms of assembly, monomer (37LRP) and homodimer (67LR). Component of the small ribosomal subunit. Mature ribosomes consist of a small (40S) and a large (60S) subunit. The 40S subunit contains about 33 different proteins and 1 molecule of RNA (18S). The 60S subunit contains about 49 different proteins and 3 molecules of RNA (28S, 5.8S and 5S). Interacts with rps21. Interacts with several laminins including at least lamb1. Interacts with mdk. Acylated. Acylation may be a prerequisite for conversion of the monomeric 37 kDa laminin receptor precursor (37LRP) to the mature dimeric 67 kDa laminin receptor (67LR), and may provide a mechanism for membrane association. Post-translationally, cleaved by stromelysin-3 (ST3) at the cell surface. Cleavage by stromelysin-3 may be a mechanism to alter cell-extracellular matrix interactions.

It localises to the cell membrane. The protein localises to the cytoplasm. The protein resides in the nucleus. Required for the assembly and/or stability of the 40S ribosomal subunit. Required for the processing of the 20S rRNA-precursor to mature 18S rRNA in a late step of the maturation of 40S ribosomal subunits. Also functions as a cell surface receptor for laminin. Plays a role in cell adhesion to the basement membrane and in the consequent activation of signaling transduction pathways. May play a role in cell fate determination and tissue morphogenesis. The sequence is that of Small ribosomal subunit protein uS2 (rpsa) from Ictalurus punctatus (Channel catfish).